Reading from the N-terminus, the 353-residue chain is UDP-N-acetylglucosamine--N-acetylmuramyl-(pentapeptide) pyrophosphoryl-undecaprenol N-acetylglucosamine transferase (353 aa).

UDP-N-acetyl-alpha-D-glucosamine contacts are provided by residues N123, R161, S189, I243, 262–267 (ALTVSE), and Q287.

The protein belongs to the glycosyltransferase 28 family. MurG subfamily.

It is found in the cell membrane. It carries out the reaction di-trans,octa-cis-undecaprenyl diphospho-N-acetyl-alpha-D-muramoyl-L-alanyl-D-glutamyl-meso-2,6-diaminopimeloyl-D-alanyl-D-alanine + UDP-N-acetyl-alpha-D-glucosamine = di-trans,octa-cis-undecaprenyl diphospho-[N-acetyl-alpha-D-glucosaminyl-(1-&gt;4)]-N-acetyl-alpha-D-muramoyl-L-alanyl-D-glutamyl-meso-2,6-diaminopimeloyl-D-alanyl-D-alanine + UDP + H(+). The protein operates within cell wall biogenesis; peptidoglycan biosynthesis. Its function is as follows. Cell wall formation. Catalyzes the transfer of a GlcNAc subunit on undecaprenyl-pyrophosphoryl-MurNAc-pentapeptide (lipid intermediate I) to form undecaprenyl-pyrophosphoryl-MurNAc-(pentapeptide)GlcNAc (lipid intermediate II). This chain is UDP-N-acetylglucosamine--N-acetylmuramyl-(pentapeptide) pyrophosphoryl-undecaprenol N-acetylglucosamine transferase, found in Buchnera aphidicola subsp. Baizongia pistaciae (strain Bp).